The following is a 375-amino-acid chain: Methylthioribose-1-phosphate isomerase (375 aa).

Residue Asp-259 is the Proton donor of the active site.

Belongs to the eIF-2B alpha/beta/delta subunits family. MtnA subfamily.

It localises to the cytoplasm. Its subcellular location is the nucleus. The catalysed reaction is 5-(methylsulfanyl)-alpha-D-ribose 1-phosphate = 5-(methylsulfanyl)-D-ribulose 1-phosphate. Its pathway is amino-acid biosynthesis; L-methionine biosynthesis via salvage pathway; L-methionine from S-methyl-5-thio-alpha-D-ribose 1-phosphate: step 1/6. Functionally, catalyzes the interconversion of methylthioribose-1-phosphate (MTR-1-P) into methylthioribulose-1-phosphate (MTRu-1-P). In Populus trichocarpa (Western balsam poplar), this protein is Methylthioribose-1-phosphate isomerase.